Reading from the N-terminus, the 465-residue chain is Na(+)-translocating NADH-quinone reductase subunit A (465 aa).

This sequence belongs to the NqrA family. As to quaternary structure, composed of six subunits; NqrA, NqrB, NqrC, NqrD, NqrE and NqrF.

It catalyses the reaction a ubiquinone + n Na(+)(in) + NADH + H(+) = a ubiquinol + n Na(+)(out) + NAD(+). NQR complex catalyzes the reduction of ubiquinone-1 to ubiquinol by two successive reactions, coupled with the transport of Na(+) ions from the cytoplasm to the periplasm. NqrA to NqrE are probably involved in the second step, the conversion of ubisemiquinone to ubiquinol. This Chlamydia trachomatis serovar L2b (strain UCH-1/proctitis) protein is Na(+)-translocating NADH-quinone reductase subunit A.